The chain runs to 351 residues: tRNA pseudouridine synthase D (351 aa).

The active-site Nucleophile is Asp-81. Residues Gly-158–Leu-304 enclose the TRUD domain.

This sequence belongs to the pseudouridine synthase TruD family.

It catalyses the reaction uridine(13) in tRNA = pseudouridine(13) in tRNA. Responsible for synthesis of pseudouridine from uracil-13 in transfer RNAs. The sequence is that of tRNA pseudouridine synthase D from Aliivibrio fischeri (strain MJ11) (Vibrio fischeri).